A 77-amino-acid chain; its full sequence is MSGFRILDSAGPQGQSSYTWEAKIAQVQHDMVAMINTFNQQIAGLSGTIMGRLDQSVIPKQQPPSSAAAISESEFED.

The tract at residues 56–77 is disordered; that stretch reads SVIPKQQPPSSAAAISESEFED. Residues 65–77 are compositionally biased toward low complexity; sequence SSAAAISESEFED.

This is an uncharacterized protein from Frog virus 3 (isolate Goorha) (FV-3).